A 1220-amino-acid polypeptide reads, in one-letter code: MGDMANNSVAYSGVKNSLKEANHDGDFGITLTELRALMELRSTDALRKIQESYGDVYGICTKLKTSPNEGLSGNPADLERREAVFGKNFIPPKKPKTFLQLVWEALQDVTLIILEIAAIVSLGLSFYQPPEGDNALCGEVSVGEEEGEGETGWIEGAAILLSVVCVVLVTAFNDWSKEKQFRGLQSRIEQEQKFTVIRGGQVIQIPVADITVGDIAQVKYGDLLPADGILIQGNDLKIDESSLTGESDHVKKSLDKDPLLLSGTHVMEGSGRMVVTAVGVNSQTGIIFTLLGAGGEEEEKKDEKKKEKKNKKQDGAIENRNKAKAQDGAAMEMQPLKSEEGGDGDEKDKKKANLPKKEKSVLQGKLTKLAVQIGKAGLLMSAITVIILVLYFVIDTFWVQKRPWLAECTPIYIQYFVKFFIIGVTVLVVAVPEGLPLAVTISLAYSVKKMMKDNNLVRHLDACETMGNATAICSDKTGTLTMNRMTVVQAYINEKHYKKVPEPEAIPPNILSYLVTGISVNCAYTSKILPPEKEGGLPRHVGNKTECALLGFLLDLKRDYQDVRNEIPEEALYKVYTFNSVRKSMSTVLKNSDGSFRIFSKGASEIILKKCFKILSANGEAKVFRPRDRDDIVKTVIEPMASEGLRTICLAFRDFPAGEPEPEWDNENDVVTGLTCIAVVGIEDPVRPEVPEAIKKCQRAGITVRMVTGDNINTARAIATKCGILHPGEDFLCLEGKDFNRRIRNEKGEIEQERIDKIWPKLRVLARSSPTDKHTLVKGIIDSTVSEQRQVVAVTGDGTNDGPALKKADVGFAMGIAGTDVAKEASDIILTDDNFTSIVKAVMWGRNVYDSISKFLQFQLTVNVVAVIVAFTGACITQDSPLKAVQMLWVNLIMDTLASLALATEPPTESLLLRKPYGRNKPLISRTMMKNILGHAFYQLVVVFTLLFAGEKFFDIDSGRNAPLHAPPSEHYTIVFNTFVLMQLFNEINARKIHGERNVFEGIFNNAIFCTIVLGTFVVQIIIVQFGGKPFSCSELSIEQWLWSIFLGMGTLLWGQLISTIPTSRLKFLKEAGHGTQKEEIPEEELAEDVEEIDHAERELRRGQILWFRGLNRIQTQIRVVNAFRSSLYEGLEKPESRSSIHNFMTHPEFRIEDSEPHIPLIDDTDAEDDAPTKRNSSPPPSPNKNNNAVDSGIHLTIEMNKSATSSSPGSPLHSLETSL.

Gly2 is subject to N-acetylglycine. Over 2–105 the chain is Cytoplasmic; it reads GDMANNSVAY…KTFLQLVWEA (104 aa). Residues Ser8 and Ser17 each carry the phosphoserine modification. The chain crosses the membrane as a helical span at residues 106–126; it reads LQDVTLIILEIAAIVSLGLSF. Topologically, residues 127 to 154 are extracellular; that stretch reads YQPPEGDNALCGEVSVGEEEGEGETGWI. A helical membrane pass occupies residues 155-175; sequence EGAAILLSVVCVVLVTAFNDW. Topologically, residues 176-366 are cytoplasmic; sequence SKEKQFRGLQ…KEKSVLQGKL (191 aa). Residues 297–356 are disordered; the sequence is EEEKKDEKKKEKKNKKQDGAIENRNKAKAQDGAAMEMQPLKSEEGGDGDEKDKKKANLPK. 2 stretches are compositionally biased toward basic and acidic residues: residues 312-325 and 337-356; these read KQDG…KAKA and KSEE…NLPK. At Ser338 the chain carries Phosphoserine. Residues 367–386 form a helical membrane-spanning segment; it reads TKLAVQIGKAGLLMSAITVI. Residues 387-418 lie on the Extracellular side of the membrane; that stretch reads ILVLYFVIDTFWVQKRPWLAECTPIYIQYFVK. Residues 419–439 form a helical membrane-spanning segment; it reads FFIIGVTVLVVAVPEGLPLAV. Residues 440 to 855 lie on the Cytoplasmic side of the membrane; that stretch reads TISLAYSVKK…RNVYDSISKF (416 aa). Asp475 functions as the 4-aspartylphosphate intermediate in the catalytic mechanism. Mg(2+) contacts are provided by Asp475, Thr477, and Asp797. The chain crosses the membrane as a helical span at residues 856-876; the sequence is LQFQLTVNVVAVIVAFTGACI. Residues 877 to 882 are Extracellular-facing; that stretch reads TQDSPL. The helical transmembrane segment at 883–903 threads the bilayer; it reads KAVQMLWVNLIMDTLASLALA. At 904–927 the chain is on the cytoplasmic side; it reads TEPPTESLLLRKPYGRNKPLISRT. The chain crosses the membrane as a helical span at residues 928 to 948; that stretch reads MMKNILGHAFYQLVVVFTLLF. The Extracellular segment spans residues 949–971; that stretch reads AGEKFFDIDSGRNAPLHAPPSEH. The chain crosses the membrane as a helical span at residues 972–991; sequence YTIVFNTFVLMQLFNEINAR. Over 992-1005 the chain is Cytoplasmic; it reads KIHGERNVFEGIFN. A helical membrane pass occupies residues 1006–1027; that stretch reads NAIFCTIVLGTFVVQIIIVQFG. Over 1028 to 1039 the chain is Extracellular; sequence GKPFSCSELSIE. The chain crosses the membrane as a helical span at residues 1040 to 1060; it reads QWLWSIFLGMGTLLWGQLIST. Residues 1061–1220 are Cytoplasmic-facing; that stretch reads IPTSRLKFLK…SPLHSLETSL (160 aa). The calmodulin-binding subdomain A stretch occupies residues 1100–1117; it reads LRRGQILWFRGLNRIQTQ. At Thr1116 the chain carries Phosphothreonine; by PKC. A required for basolateral membrane targeting region spans residues 1118-1220; that stretch reads IRVVNAFRSS…SPLHSLETSL (103 aa). Phosphoserine is present on residues Ser1140 and Ser1155. The segment at 1160 to 1220 is disordered; it reads PLIDDTDAED…SPLHSLETSL (61 aa). A Phosphothreonine modification is found at Thr1165. Phosphoserine is present on residues Ser1178 and Ser1182. Residues 1200–1220 show a composition bias toward polar residues; sequence MNKSATSSSPGSPLHSLETSL.

The protein belongs to the cation transport ATPase (P-type) (TC 3.A.3) family. Type IIB subfamily. Monomer. Dimer. Oligomer. Calmodulin binding. Interacts with PDZD11. Interacts with SLC35G1 and STIM1. Interacts with YWHAE; interacts with the monomeric and dimeric forms of the YWHAE but prefer the monomer form; this interaction inhibits calcium-transporting ATPase activity. Interacts with NPTN; this interaction stabilizes ATP2B1 and increases ATPase activity; this interaction controls T cell calcium homeostasis following T cell activation. Interacts with EPB41; regulates small intestinal calcium absorption through regulation of membrane expression of ATP2B1. Expressed in the retina, with strongest expression in the outer plexiform layer and lower expression levels in the inner nuclear layer and the inner plexiform layer. Specifically expressed in the following retinal cell types: photoreceptor cells, cone bipolar cells and horizontal cells. Expressed in osteoclasts (at protein level). Expressed at highest levels in brain, intestine, kidney, and stomach, and at lower levels in liver, lung, aorta, portal vein, urinary bladder, diaphragm, seminal vesicles and testes. Expressed in small intestinal epithelium.

The protein localises to the cell membrane. It is found in the basolateral cell membrane. It localises to the synapse. Its subcellular location is the presynaptic cell membrane. The protein resides in the cytoplasmic vesicle. The protein localises to the secretory vesicle. It is found in the synaptic vesicle membrane. The enzyme catalyses Ca(2+)(in) + ATP + H2O = Ca(2+)(out) + ADP + phosphate + H(+). Functionally, catalyzes the hydrolysis of ATP coupled with the transport of calcium from the cytoplasm to the extracellular space thereby maintaining intracellular calcium homeostasis. Plays a role in blood pressure regulation through regulation of intracellular calcium concentration and nitric oxide production leading to regulation of vascular smooth muscle cells vasoconstriction. Positively regulates bone mineralization through absorption of calcium from the intestine. Plays dual roles in osteoclast differentiation and survival by regulating RANKL-induced calcium oscillations in preosteoclasts and mediating calcium extrusion in mature osteoclasts. Regulates insulin sensitivity through calcium/calmodulin signaling pathway by regulating AKT1 activation and NOS3 activation in endothelial cells. May play a role in synaptic transmission by modulating calcium and proton dynamics at the synaptic vesicles. This chain is Plasma membrane calcium-transporting ATPase 1, found in Mus musculus (Mouse).